We begin with the raw amino-acid sequence, 222 residues long: Charged multivesicular body protein 4a (222 aa).

Disordered stretches follow at residues 1–21 (MSGL…TPEE) and 177–222 (LLHV…EWVS). The interval 1-116 (MSGLGRLFGR…ELAAQGLKKA (116 aa)) is interaction with phosphoinosides. The segment at 1–150 (MSGLGRLFGR…QISDAISRPV (150 aa)) is intramolecular interaction with C-terminus. Coiled-coil stretches lie at residues 20-105 (EEAI…VLRT) and 155-180 (DVDE…LLHV). The interval 151–222 (GFGDDVDEDE…ELKQLAEWVS (72 aa)) is intramolecular interaction with N-terminus. Serine 196 carries the phosphoserine modification.

The protein belongs to the SNF7 family. Probable core component of the endosomal sorting required for transport complex III (ESCRT-III). ESCRT-III components are thought to multimerize to form a flat lattice on the perimeter membrane of the endosome. Several assembly forms of ESCRT-III may exist that interact and act sequentially. Self-associates; overexpression leads to the assembly of filaments that curve and associate to create circular rings. Interacts with CHMP2A. Interacts with CHMP3; the interaction requires the release of CHMP4A autoinhibition. Interacts with CHMP4B. Interacts with CHMP4C. Interacts with CHMP6. Interacts with VPS4A. Interacts with PDCD6IP; the interaction is direct.

Its subcellular location is the cytoplasmic vesicle membrane. The protein resides in the late endosome membrane. Its function is as follows. Probable core component of the endosomal sorting required for transport complex III (ESCRT-III) which is involved in multivesicular bodies (MVBs) formation and sorting of endosomal cargo proteins into MVBs. MVBs contain intraluminal vesicles (ILVs) that are generated by invagination and scission from the limiting membrane of the endosome and mostly are delivered to lysosomes enabling degradation of membrane proteins, such as stimulated growth factor receptors, lysosomal enzymes and lipids. The MVB pathway appears to require the sequential function of ESCRT-O, -I,-II and -III complexes. ESCRT-III proteins mostly dissociate from the invaginating membrane before the ILV is released. The ESCRT machinery also functions in topologically equivalent membrane fission events, such as the terminal stages of cytokinesis and the budding of enveloped viruses (lentiviruses). ESCRT-III proteins are believed to mediate the necessary vesicle extrusion and/or membrane fission activities, possibly in conjunction with the AAA ATPase VPS4. When overexpressed, membrane-assembled circular arrays of CHMP4A filaments can promote or stabilize negative curvature and outward budding. CHMP4A/B/C are required for the exosomal release of SDCBP, CD63 and syndecan. The sequence is that of Charged multivesicular body protein 4a (CHMP4A) from Bos taurus (Bovine).